A 309-amino-acid polypeptide reads, in one-letter code: D-alanine--D-alanine ligase (309 aa).

One can recognise an ATP-grasp domain in the interval K99 to D304. ATP is bound at residue L132–T187. D258, E271, and N273 together coordinate Mg(2+).

Belongs to the D-alanine--D-alanine ligase family. Mg(2+) serves as cofactor. Requires Mn(2+) as cofactor.

The protein localises to the cytoplasm. The enzyme catalyses 2 D-alanine + ATP = D-alanyl-D-alanine + ADP + phosphate + H(+). It functions in the pathway cell wall biogenesis; peptidoglycan biosynthesis. Its function is as follows. Cell wall formation. The protein is D-alanine--D-alanine ligase of Moorella thermoacetica (strain ATCC 39073 / JCM 9320).